Consider the following 268-residue polypeptide: Shikimate dehydrogenase (NADP(+)) (268 aa).

Shikimate contacts are provided by residues 13 to 15 and Thr-60; that span reads SLS. The active-site Proton acceptor is Lys-64. Glu-76 lines the NADP(+) pocket. Shikimate-binding residues include Asn-85 and Asp-100. Residues 124–128, 148–153, and Ile-209 each bind NADP(+); these read GAGGA and NRTMAR. Tyr-211 is a shikimate binding site. Gly-232 is a binding site for NADP(+).

Belongs to the shikimate dehydrogenase family. As to quaternary structure, homodimer.

It catalyses the reaction shikimate + NADP(+) = 3-dehydroshikimate + NADPH + H(+). It participates in metabolic intermediate biosynthesis; chorismate biosynthesis; chorismate from D-erythrose 4-phosphate and phosphoenolpyruvate: step 4/7. In terms of biological role, involved in the biosynthesis of the chorismate, which leads to the biosynthesis of aromatic amino acids. Catalyzes the reversible NADPH linked reduction of 3-dehydroshikimate (DHSA) to yield shikimate (SA). The polypeptide is Shikimate dehydrogenase (NADP(+)) (Staphylococcus aureus (strain bovine RF122 / ET3-1)).